The following is a 515-amino-acid chain: Ent-isokaurene C2/C3-hydroxylase (515 aa).

Residues 5–25 (LILDLCLSALFVVVLSKLVSS) traverse the membrane as a helical segment. Residue cysteine 452 participates in heme binding.

This sequence belongs to the cytochrome P450 family. Heme serves as cofactor.

It is found in the membrane. The catalysed reaction is ent-isokaurene + 2 reduced [NADPH--hemoprotein reductase] + 2 O2 = ent-isokaurene-2beta,3beta-diol + 2 oxidized [NADPH--hemoprotein reductase] + 2 H2O + 2 H(+). In terms of biological role, enzyme of the diterpenoid metabolism involved in the biosynthesis of antibacterial oryzalides such as phytocassane. The protein is Ent-isokaurene C2/C3-hydroxylase (CYP71Z6) of Oryza sativa subsp. japonica (Rice).